We begin with the raw amino-acid sequence, 383 residues long: S-adenosylmethionine synthase (383 aa).

Histidine 15 lines the ATP pocket. Aspartate 17 is a Mg(2+) binding site. Residue glutamate 43 coordinates K(+). L-methionine-binding residues include glutamate 56 and glutamine 99. The interval 99–109 (QSPDINQGVDR) is flexible loop. ATP is bound by residues 164 to 166 (DAK), 230 to 231 (RF), aspartate 239, 245 to 246 (RK), alanine 262, and lysine 266. Residue aspartate 239 participates in L-methionine binding. Lysine 270 is an L-methionine binding site.

Belongs to the AdoMet synthase family. Homotetramer; dimer of dimers. Requires Mg(2+) as cofactor. K(+) is required as a cofactor.

The protein localises to the cytoplasm. It catalyses the reaction L-methionine + ATP + H2O = S-adenosyl-L-methionine + phosphate + diphosphate. It functions in the pathway amino-acid biosynthesis; S-adenosyl-L-methionine biosynthesis; S-adenosyl-L-methionine from L-methionine: step 1/1. In terms of biological role, catalyzes the formation of S-adenosylmethionine (AdoMet) from methionine and ATP. The overall synthetic reaction is composed of two sequential steps, AdoMet formation and the subsequent tripolyphosphate hydrolysis which occurs prior to release of AdoMet from the enzyme. This chain is S-adenosylmethionine synthase, found in Shewanella sp. (strain W3-18-1).